Consider the following 413-residue polypeptide: Multifunctional CCA protein (413 aa).

Residues glycine 8 and arginine 11 each coordinate ATP. Glycine 8 and arginine 11 together coordinate CTP. Positions 21 and 23 each coordinate Mg(2+). 3 residues coordinate ATP: arginine 91, arginine 137, and arginine 140. CTP is bound by residues arginine 91, arginine 137, and arginine 140. An HD domain is found at 228 to 329 (TGIHTLMTLS…VKLFDNIDAW (102 aa)).

Belongs to the tRNA nucleotidyltransferase/poly(A) polymerase family. Bacterial CCA-adding enzyme type 1 subfamily. Monomer. Can also form homodimers and oligomers. It depends on Mg(2+) as a cofactor. Ni(2+) is required as a cofactor.

It carries out the reaction a tRNA precursor + 2 CTP + ATP = a tRNA with a 3' CCA end + 3 diphosphate. The enzyme catalyses a tRNA with a 3' CCA end + 2 CTP + ATP = a tRNA with a 3' CCACCA end + 3 diphosphate. In terms of biological role, catalyzes the addition and repair of the essential 3'-terminal CCA sequence in tRNAs without using a nucleic acid template. Adds these three nucleotides in the order of C, C, and A to the tRNA nucleotide-73, using CTP and ATP as substrates and producing inorganic pyrophosphate. tRNA 3'-terminal CCA addition is required both for tRNA processing and repair. Also involved in tRNA surveillance by mediating tandem CCA addition to generate a CCACCA at the 3' terminus of unstable tRNAs. While stable tRNAs receive only 3'-terminal CCA, unstable tRNAs are marked with CCACCA and rapidly degraded. The protein is Multifunctional CCA protein of Enterobacter sp. (strain 638).